Consider the following 329-residue polypeptide: Biotin synthase (329 aa).

One can recognise a Radical SAM core domain in the interval 48–278 (FVGDKVFLCS…TKRISICGGR (231 aa)). The [4Fe-4S] cluster site is built by cysteine 66, cysteine 70, and cysteine 73. Residues serine 143 and cysteine 203 each coordinate [2Fe-2S] cluster.

It belongs to the radical SAM superfamily. Biotin synthase family. In terms of assembly, homodimer. [4Fe-4S] cluster serves as cofactor. [2Fe-2S] cluster is required as a cofactor.

It carries out the reaction (4R,5S)-dethiobiotin + (sulfur carrier)-SH + 2 reduced [2Fe-2S]-[ferredoxin] + 2 S-adenosyl-L-methionine = (sulfur carrier)-H + biotin + 2 5'-deoxyadenosine + 2 L-methionine + 2 oxidized [2Fe-2S]-[ferredoxin]. The protein operates within cofactor biosynthesis; biotin biosynthesis; biotin from 7,8-diaminononanoate: step 2/2. Its function is as follows. Catalyzes the conversion of dethiobiotin (DTB) to biotin by the insertion of a sulfur atom into dethiobiotin via a radical-based mechanism. This chain is Biotin synthase, found in Geotalea daltonii (strain DSM 22248 / JCM 15807 / FRC-32) (Geobacter daltonii).